The following is a 478-amino-acid chain: Glutamyl-tRNA(Gln) amidotransferase subunit A 2 (478 aa).

Active-site charge relay system residues include Lys-79 and Ser-154. The active-site Acyl-ester intermediate is Ser-178.

Belongs to the amidase family. GatA subfamily. As to quaternary structure, heterotrimer of A, B and C subunits.

The catalysed reaction is L-glutamyl-tRNA(Gln) + L-glutamine + ATP + H2O = L-glutaminyl-tRNA(Gln) + L-glutamate + ADP + phosphate + H(+). Allows the formation of correctly charged Gln-tRNA(Gln) through the transamidation of misacylated Glu-tRNA(Gln) in organisms which lack glutaminyl-tRNA synthetase. The reaction takes place in the presence of glutamine and ATP through an activated gamma-phospho-Glu-tRNA(Gln). The sequence is that of Glutamyl-tRNA(Gln) amidotransferase subunit A 2 (gatA2) from Clostridium acetobutylicum (strain ATCC 824 / DSM 792 / JCM 1419 / IAM 19013 / LMG 5710 / NBRC 13948 / NRRL B-527 / VKM B-1787 / 2291 / W).